We begin with the raw amino-acid sequence, 663 residues long: Methionine--tRNA ligase (663 aa).

Residues 10–20 (AYTNGPLHLGH) carry the 'HIGH' region motif. The Zn(2+) site is built by Cys142, Cys145, Cys154, and Cys157. The 'KMSKS' region motif lies at 323–327 (KMSTS). Thr326 provides a ligand contact to ATP. The tRNA-binding domain occupies 563-663 (YFGNVDLRVG…RDLPVGSKIH (101 aa)).

Belongs to the class-I aminoacyl-tRNA synthetase family. MetG type 1 subfamily. Homodimer. The cofactor is Zn(2+).

It is found in the cytoplasm. It carries out the reaction tRNA(Met) + L-methionine + ATP = L-methionyl-tRNA(Met) + AMP + diphosphate. Functionally, is required not only for elongation of protein synthesis but also for the initiation of all mRNA translation through initiator tRNA(fMet) aminoacylation. The chain is Methionine--tRNA ligase from Methanococcus maripaludis (strain C7 / ATCC BAA-1331).